Reading from the N-terminus, the 301-residue chain is Mitochondrial thiamine pyrophosphate carrier 1 (301 aa).

Solcar repeat units follow at residues 15–102, 115–200, and 206–293; these read VTPT…ISKS, SSAN…AREL, and RVPF…SLSF. 6 helical membrane-spanning segments follow: residues 20–38, 79–99, 121–141, 172–192, 207–227, and 252–272; these read ALVAGSIAGAISRAFTAPL, VPAEILYILYGGVQFGSYSII, LIVGIGSGIVSTLVTYPFDLL, IYAGIRPAMLSVSSTTGLMFW, VPFIEAICGFIAGATSKGITF, and IFVTILKNEGVFGLYKGFGIS.

This sequence belongs to the mitochondrial carrier (TC 2.A.29) family.

It localises to the mitochondrion inner membrane. Its function is as follows. Mitochondrial transporter that mediates uptake of thiamine pyrophosphate (ThPP) into mitochondria. This Candida albicans (strain SC5314 / ATCC MYA-2876) (Yeast) protein is Mitochondrial thiamine pyrophosphate carrier 1 (TPC1).